Reading from the N-terminus, the 810-residue chain is MKRRSDALLGSFQATNVTPPSDNSNSTAGGANGSNSGTPTSTSGKKRNKLIKSCGFCRRRKLRCDQQKPMCSTCISRNLTTCQYAEEFNKNIEKKATYGPYPNADLLKKVEELENKIRILEAEKNTNSSASSMYTSPNFPPLGTSVGRGSTETSSPLPDGVINPYADRYYLQSKHSGRSTLYGPTSMRTQIANSNWGFIEKYKQLWAKVKVERNKWKQNNQKTMCRELGLLDESDWQPDPLIKQICRFLPSYNKALSILDDFFNDGACNEINVILDKAKVRRDFLDYFMPEKEVKAEGDRSIVYILSNPKKNYYKAAVILLILCLKYFHTDVPTPIEKFFTLLKGASTAKVFYIERAQMLILFYYHRETYSFGGDGSDLVNINECLVTTVTTIGLHLNIRETFKEHEVFMGSIESLENVWLMAIFIDYNISCNVGRPLLINKFYLDENQDHCILNSKSKTYEGKLKRYLKLTRPMLLTLYDRDKFPDLKAYSKRIINFVEEELGPLGHYTGENISEEVPLRESRILSMAVGLLLSFYALIHSVLKVRNIESKNNTFQLVLINFSIIVNTTIRCYRIDKALYPEKFEASNPHLPPHMALSMSLTAGLFSKTLVFFCSLIYFKLTLFENGLCLSNDMEVGWSDLTKLTVPLDKDLSLGTAMSLYSSIFDRLFTVGNKELIRTMHRSSQFVIELAIERTYRTILGNVIEFRKLTEETWLAQIKQELDPQSDNPSSEAKIVSDRQRDLSLAVPTPTPSIIPMLPSPGETKNHAKSQSEIIQMLTDEFWANYNSGWEELINQSEFSTLFDDYKDN.

Residues 1 to 47 (MKRRSDALLGSFQATNVTPPSDNSNSTAGGANGSNSGTPTSTSGKKR) are disordered. Residues 12 to 22 (FQATNVTPPSD) are compositionally biased toward polar residues. Residues 23-43 (NSNSTAGGANGSNSGTPTSTS) show a composition bias toward low complexity. A DNA-binding region (zn(2)-C6 fungal-type) is located at residues 54 to 82 (CGFCRRRKLRCDQQKPMCSTCISRNLTTC). Residues 722–742 (ELDPQSDNPSSEAKIVSDRQR) are disordered.

The protein resides in the cytoplasm. It is found in the nucleus. Transcription factor involved in the regulation of multidrug resistance genes. Acts in concert with YRR1. In Saccharomyces cerevisiae (strain ATCC 204508 / S288c) (Baker's yeast), this protein is Zinc finger transcription factor YRR1 (YRR1).